Consider the following 330-residue polypeptide: Malate dehydrogenase (330 aa).

11-17 (GGAGQIA) serves as a coordination point for NAD(+). Substrate is bound by residues arginine 92 and arginine 98. NAD(+)-binding positions include asparagine 105, glutamine 112, and 129–131 (VGN). Residues asparagine 131 and arginine 162 each coordinate substrate. The Proton acceptor role is filled by histidine 187.

It belongs to the LDH/MDH superfamily. MDH type 2 family.

It carries out the reaction (S)-malate + NAD(+) = oxaloacetate + NADH + H(+). Catalyzes the reversible oxidation of malate to oxaloacetate. The sequence is that of Malate dehydrogenase from Protochlamydia amoebophila (strain UWE25).